The chain runs to 169 residues: Myosin regulatory light chain 2, skeletal muscle isoform A (169 aa).

Serine 21 is modified (phosphoserine). EF-hand domains follow at residues 26-61 (SQIQEYKEAFTIIDQNRDGIISKDDLRDVLASMGQL), 96-131 (DPEDVIVSAFKVLDPEGTGSIKKEFLEELLTTQCDR), and 132-167 (FTAEEMKNLWAAFPPDVAGNVDYKNICYVITHGEEK). Ca(2+) contacts are provided by aspartate 39, asparagine 41, aspartate 43, and aspartate 50.

As to quaternary structure, myosin is a hexamer of 2 heavy chains and 4 light chains. Interacts with nanos3; the interaction negatively regulates mylpfa phosphorylation.

Myosin regulatory subunit that plays a role to maintain muscle integrity during early development. Plays a role in muscle contraction. The chain is Myosin regulatory light chain 2, skeletal muscle isoform A (mylpfa) from Danio rerio (Zebrafish).